A 350-amino-acid chain; its full sequence is Anthranilate phosphoribosyltransferase (350 aa).

Residues G81, 84–85 (GD), T89, 91–94 (NIST), 109–117 (KHGGRSVSS), and S121 contribute to the 5-phospho-alpha-D-ribose 1-diphosphate site. G81 lines the anthranilate pocket. Mg(2+) is bound at residue S93. Position 167 (R167) interacts with anthranilate. The Mg(2+) site is built by D230 and E231.

It belongs to the anthranilate phosphoribosyltransferase family. Homodimer. The cofactor is Mg(2+).

The catalysed reaction is N-(5-phospho-beta-D-ribosyl)anthranilate + diphosphate = 5-phospho-alpha-D-ribose 1-diphosphate + anthranilate. It participates in amino-acid biosynthesis; L-tryptophan biosynthesis; L-tryptophan from chorismate: step 2/5. Its function is as follows. Catalyzes the transfer of the phosphoribosyl group of 5-phosphorylribose-1-pyrophosphate (PRPP) to anthranilate to yield N-(5'-phosphoribosyl)-anthranilate (PRA). In Nitrosospira multiformis (strain ATCC 25196 / NCIMB 11849 / C 71), this protein is Anthranilate phosphoribosyltransferase.